The following is a 452-amino-acid chain: Probable hexaprenyl pyrophosphate synthase, mitochondrial (452 aa).

Residues lysine 108, arginine 111, and histidine 204 each contribute to the isopentenyl diphosphate site. Residues aspartate 211 and aspartate 215 each contribute to the Mg(2+) site. An all-trans-polyprenyl diphosphate is bound at residue arginine 220. Arginine 221 contributes to the isopentenyl diphosphate binding site. An all-trans-polyprenyl diphosphate-binding residues include lysine 303, threonine 304, glutamine 341, and lysine 358.

The protein belongs to the FPP/GGPP synthase family. Requires Mg(2+) as cofactor.

The protein localises to the mitochondrion. It participates in cofactor biosynthesis; ubiquinone biosynthesis. In terms of biological role, assembly of polyisoprenoid side chains. The polyprenyl synthase of coenzyme Q biosynthesis catalyzes the formation from isopentenyl diphosphate of all trans-polyprenyl pyrophosphates generally ranging in length of between 6 and 10 isoprene units depending on the species. The polypeptide is Probable hexaprenyl pyrophosphate synthase, mitochondrial (COQ1) (Yarrowia lipolytica (strain CLIB 122 / E 150) (Yeast)).